The following is a 592-amino-acid chain: Signal peptide peptidase-like 2B (592 aa).

The N-terminal stretch at 1-25 (MAAAVAAALARLLAAFLLLAAQVAC) is a signal peptide. The Lumenal portion of the chain corresponds to 26 to 174 (EYGMVHVVSQ…APKEPVLDYN (149 aa)). The PA domain occupies 71-149 (TASLLCSAAD…VALLSYKDML (79 aa)). Residues Asn-97 and Asn-129 are each glycosylated (N-linked (GlcNAc...) asparagine). A helical transmembrane segment spans residues 175-195 (MVIIFIMAVGTVAIGGYWAGS). Over 196–221 (RDVKKRYMKHKRDDGPEKQEDEAVDV) the chain is Cytoplasmic. The chain crosses the membrane as a helical span at residues 222–244 (TPVMTCVFVVMCCSMLVLLYYFY). The Lumenal portion of the chain corresponds to 245–248 (DLLV). Residues 249 to 271 (YVVIGIFCLASATGLYSCLAPCV) traverse the membrane as a helical segment. Topologically, residues 272–293 (RRLPFGKCRIPNNSLPYFHKRP) are cytoplasmic. A helical membrane pass occupies residues 294 to 314 (QARMLLLALFCVAVSVVWGVF). Residues 315–319 (RNEDQ) are Lumenal-facing. The helical transmembrane segment at 320–340 (WAWVLQDALGIAFCLYMLKTI) threads the bilayer. Residues 341 to 348 (RLPTFKAC) lie on the Cytoplasmic side of the membrane. Residues 349-369 (TLLLLVLFLYDIFFVFITPFL) form a helical membrane-spanning segment. Asp-359 is an active-site residue. Residues 370–412 (TKSGSSIMVEVATGPSDSATREKLPMVLKVPRLNSSPLALCDR) are Lumenal-facing. A helical membrane pass occupies residues 413 to 433 (PFSLLGFGDILVPGLLVAYCH). Residue Asp-421 is part of the active site. Topologically, residues 434-445 (RFDIQVQSSRVY) are cytoplasmic. The chain crosses the membrane as a helical span at residues 446-466 (FVACTIAYGVGLLVTFVALAL). Residues 467 to 470 (MQRG) lie on the Lumenal side of the membrane. The chain crosses the membrane as a helical span at residues 471–491 (QPALLYLVPCTLVTSCAVALW). The PAL motif lies at 472–474 (PAL). The Cytoplasmic segment spans residues 492–592 (RRELGVFWTG…SPVTQPGASA (101 aa)). Residues 512–524 (PWAPAPADGPQPP) show a composition bias toward pro residues. The segment at 512-592 (PWAPAPADGP…SPVTQPGASA (81 aa)) is disordered. The span at 580-592 (AQPSPVTQPGASA) shows a compositional bias: polar residues.

It belongs to the peptidase A22B family. As to quaternary structure, monomer. Homodimer. Interacts with ITM2B. Interacts with TNF. Interacts with the simian foamy virus envelope glycoprotein gp130 and its processed leader peptide gp18LP; preferentially interacts with the leader peptide gp18LP. Post-translationally, glycosylated. As to expression, expressed predominantly in adrenal cortex and mammary gland.

It is found in the cell membrane. It localises to the golgi apparatus membrane. Its subcellular location is the lysosome membrane. The protein resides in the endosome membrane. The protein localises to the membrane. Functionally, intramembrane-cleaving aspartic protease (I-CLiP) that cleaves type II membrane signal peptides in the hydrophobic plane of the membrane. Functions in ITM2B and TNF processing. Catalyzes the intramembrane cleavage of the anchored fragment of shed TNF-alpha (TNF), which promotes the release of the intracellular domain (ICD) for signaling to the nucleus. May play a role in the regulation of innate and adaptive immunity. Catalyzes the intramembrane cleavage of the simian foamy virus processed leader peptide gp18 of the envelope glycoprotein gp130 dependently of prior ectodomain shedding by furin or furin-like proprotein convertase (PC)-mediated cleavage proteolysis. The protein is Signal peptide peptidase-like 2B of Homo sapiens (Human).